We begin with the raw amino-acid sequence, 216 residues long: Imidazole glycerol phosphate synthase subunit HisH (216 aa).

Residues 2-216 enclose the Glutamine amidotransferase type-1 domain; the sequence is RVAIIDYGSG…LISNFLRWKP (215 aa). Cys88 acts as the Nucleophile in catalysis. Catalysis depends on residues His196 and Glu198.

In terms of assembly, heterodimer of HisH and HisF.

The protein resides in the cytoplasm. The catalysed reaction is 5-[(5-phospho-1-deoxy-D-ribulos-1-ylimino)methylamino]-1-(5-phospho-beta-D-ribosyl)imidazole-4-carboxamide + L-glutamine = D-erythro-1-(imidazol-4-yl)glycerol 3-phosphate + 5-amino-1-(5-phospho-beta-D-ribosyl)imidazole-4-carboxamide + L-glutamate + H(+). It catalyses the reaction L-glutamine + H2O = L-glutamate + NH4(+). It functions in the pathway amino-acid biosynthesis; L-histidine biosynthesis; L-histidine from 5-phospho-alpha-D-ribose 1-diphosphate: step 5/9. Functionally, IGPS catalyzes the conversion of PRFAR and glutamine to IGP, AICAR and glutamate. The HisH subunit catalyzes the hydrolysis of glutamine to glutamate and ammonia as part of the synthesis of IGP and AICAR. The resulting ammonia molecule is channeled to the active site of HisF. This Agrobacterium fabrum (strain C58 / ATCC 33970) (Agrobacterium tumefaciens (strain C58)) protein is Imidazole glycerol phosphate synthase subunit HisH.